We begin with the raw amino-acid sequence, 298 residues long: Protease HtpX homolog (298 aa).

2 consecutive transmembrane segments (helical) span residues 15 to 35 (YVMI…GYVF) and 39 to 59 (AMAG…MMIA). Histidine 143 serves as a coordination point for Zn(2+). Glutamate 144 is an active-site residue. Histidine 147 provides a ligand contact to Zn(2+). Helical transmembrane passes span 158–178 (IALA…RSFW) and 197–217 (IVMM…TTIA). Residue glutamate 226 participates in Zn(2+) binding.

This sequence belongs to the peptidase M48B family. Requires Zn(2+) as cofactor.

It localises to the cell membrane. The protein is Protease HtpX homolog of Pediococcus pentosaceus (strain ATCC 25745 / CCUG 21536 / LMG 10740 / 183-1w).